The chain runs to 306 residues: Probable GTP 3',8-cyclase (306 aa).

The Radical SAM core domain maps to 5-232; sequence RFGRPVTNLR…RRRKYFLPVD (228 aa). Arg14 is a GTP binding site. [4Fe-4S] cluster is bound by residues Cys21 and Cys25. Tyr27 is an S-adenosyl-L-methionine binding site. Cys28 contacts [4Fe-4S] cluster. Lys61 lines the GTP pocket. Gly65 contacts S-adenosyl-L-methionine. Thr90 serves as a coordination point for GTP. Ser114 is a binding site for S-adenosyl-L-methionine. Position 150 (Lys150) interacts with GTP. Met189 contacts S-adenosyl-L-methionine. Residues Cys250 and Cys253 each contribute to the [4Fe-4S] cluster site. 255–257 lines the GTP pocket; sequence RLR. Cys267 provides a ligand contact to [4Fe-4S] cluster.

The protein belongs to the radical SAM superfamily. MoaA family. The cofactor is [4Fe-4S] cluster.

It catalyses the reaction GTP + AH2 + S-adenosyl-L-methionine = (8S)-3',8-cyclo-7,8-dihydroguanosine 5'-triphosphate + 5'-deoxyadenosine + L-methionine + A + H(+). The protein operates within cofactor biosynthesis; molybdopterin biosynthesis. In terms of biological role, catalyzes the cyclization of GTP to (8S)-3',8-cyclo-7,8-dihydroguanosine 5'-triphosphate. The sequence is that of Probable GTP 3',8-cyclase from Pyrococcus abyssi (strain GE5 / Orsay).